We begin with the raw amino-acid sequence, 248 residues long: Tryptophan synthase alpha chain (248 aa).

Active-site proton acceptor residues include glutamate 36 and aspartate 47.

The protein belongs to the TrpA family. As to quaternary structure, tetramer of two alpha and two beta chains.

The catalysed reaction is (1S,2R)-1-C-(indol-3-yl)glycerol 3-phosphate + L-serine = D-glyceraldehyde 3-phosphate + L-tryptophan + H2O. The protein operates within amino-acid biosynthesis; L-tryptophan biosynthesis; L-tryptophan from chorismate: step 5/5. In terms of biological role, the alpha subunit is responsible for the aldol cleavage of indoleglycerol phosphate to indole and glyceraldehyde 3-phosphate. The sequence is that of Tryptophan synthase alpha chain from Pyrococcus furiosus (strain ATCC 43587 / DSM 3638 / JCM 8422 / Vc1).